The following is a 194-amino-acid chain: Peptidyl-tRNA hydrolase (194 aa).

Tyr-17 is a tRNA binding site. His-22 serves as the catalytic Proton acceptor. Positions 68, 70, and 116 each coordinate tRNA.

This sequence belongs to the PTH family. In terms of assembly, monomer.

It localises to the cytoplasm. The enzyme catalyses an N-acyl-L-alpha-aminoacyl-tRNA + H2O = an N-acyl-L-amino acid + a tRNA + H(+). Hydrolyzes ribosome-free peptidyl-tRNAs (with 1 or more amino acids incorporated), which drop off the ribosome during protein synthesis, or as a result of ribosome stalling. In terms of biological role, catalyzes the release of premature peptidyl moieties from peptidyl-tRNA molecules trapped in stalled 50S ribosomal subunits, and thus maintains levels of free tRNAs and 50S ribosomes. This chain is Peptidyl-tRNA hydrolase, found in Pseudomonas putida (strain GB-1).